The sequence spans 423 residues: Gamma-glutamyl phosphate reductase (423 aa).

It belongs to the gamma-glutamyl phosphate reductase family.

The protein resides in the cytoplasm. The catalysed reaction is L-glutamate 5-semialdehyde + phosphate + NADP(+) = L-glutamyl 5-phosphate + NADPH + H(+). It functions in the pathway amino-acid biosynthesis; L-proline biosynthesis; L-glutamate 5-semialdehyde from L-glutamate: step 2/2. In terms of biological role, catalyzes the NADPH-dependent reduction of L-glutamate 5-phosphate into L-glutamate 5-semialdehyde and phosphate. The product spontaneously undergoes cyclization to form 1-pyrroline-5-carboxylate. In Pseudomonas putida (strain GB-1), this protein is Gamma-glutamyl phosphate reductase.